The chain runs to 100 residues: Large ribosomal subunit protein uL23 (100 aa).

The protein belongs to the universal ribosomal protein uL23 family. Part of the 50S ribosomal subunit. Contacts protein L29, and trigger factor when it is bound to the ribosome.

In terms of biological role, one of the early assembly proteins it binds 23S rRNA. One of the proteins that surrounds the polypeptide exit tunnel on the outside of the ribosome. Forms the main docking site for trigger factor binding to the ribosome. In Vibrio atlanticus (strain LGP32) (Vibrio splendidus (strain Mel32)), this protein is Large ribosomal subunit protein uL23.